The sequence spans 204 residues: Holliday junction branch migration complex subunit RuvA (204 aa).

Residues 1–64 (MIGKLKGTID…EDQLKLFGFM (64 aa)) are domain I. The tract at residues 65–143 (TALEREWFNL…AFAGEAINIA (79 aa)) is domain II. The tract at residues 144-151 (LKQELGEG) is flexible linker. Positions 152-204 (VAAAPVADAVSALTNLGYSRDQAANAVAAAMKTAGDGADSAKLIRLGLKELAR) are domain III.

This sequence belongs to the RuvA family. Homotetramer. Forms an RuvA(8)-RuvB(12)-Holliday junction (HJ) complex. HJ DNA is sandwiched between 2 RuvA tetramers; dsDNA enters through RuvA and exits via RuvB. An RuvB hexamer assembles on each DNA strand where it exits the tetramer. Each RuvB hexamer is contacted by two RuvA subunits (via domain III) on 2 adjacent RuvB subunits; this complex drives branch migration. In the full resolvosome a probable DNA-RuvA(4)-RuvB(12)-RuvC(2) complex forms which resolves the HJ.

It localises to the cytoplasm. The RuvA-RuvB-RuvC complex processes Holliday junction (HJ) DNA during genetic recombination and DNA repair, while the RuvA-RuvB complex plays an important role in the rescue of blocked DNA replication forks via replication fork reversal (RFR). RuvA specifically binds to HJ cruciform DNA, conferring on it an open structure. The RuvB hexamer acts as an ATP-dependent pump, pulling dsDNA into and through the RuvAB complex. HJ branch migration allows RuvC to scan DNA until it finds its consensus sequence, where it cleaves and resolves the cruciform DNA. This is Holliday junction branch migration complex subunit RuvA from Rhizobium etli (strain CIAT 652).